Consider the following 206-residue polypeptide: Probable peptidyl-tRNA hydrolase (206 aa).

Residue His48 is the Proton acceptor of the active site. Residues Tyr83, Asn85, and Asn137 each coordinate tRNA.

This sequence belongs to the PTH family.

It localises to the mitochondrion. It catalyses the reaction an N-acyl-L-alpha-aminoacyl-tRNA + H2O = an N-acyl-L-amino acid + a tRNA + H(+). Its function is as follows. Peptidyl-tRNA hydrolase involved in the recycling of tRNA-Lys from diacetyl-lysyl-tRNA-Lys and is important for mitochondrial function. The polypeptide is Probable peptidyl-tRNA hydrolase (pth1) (Schizosaccharomyces pombe (strain 972 / ATCC 24843) (Fission yeast)).